Here is an 81-residue protein sequence, read N- to C-terminus: HssA/B-like protein 5 (81 aa).

The protein belongs to the hssA/B family.

This Dictyostelium discoideum (Social amoeba) protein is HssA/B-like protein 5 (hssl5).